The following is a 480-amino-acid chain: Glutathione reductase (480 aa).

The FAD site is built by serine 31 and glycine 32. Serine 31 is a binding site for glutathione. A glutathione-binding site is contributed by arginine 38. 4 residues coordinate FAD: glutamate 51, threonine 58, cysteine 59, and lysine 67. A disulfide bridge links cysteine 59 with cysteine 64. Residue tyrosine 121 coordinates glutathione. Position 137 (alanine 137) interacts with FAD. 4 residues coordinate NADP(+): isoleucine 206, glutamate 209, arginine 226, and glycine 291. Aspartate 331 serves as a coordination point for FAD. Residue glutamate 337 coordinates NADP(+). Residue threonine 339 participates in FAD binding. Glutathione is bound at residue arginine 347. Valine 372 is an NADP(+) binding site. Glutathione is bound at residue lysine 422. Position 469 (histidine 469) interacts with FAD. Histidine 469 (proton acceptor) is an active-site residue.

It belongs to the class-I pyridine nucleotide-disulfide oxidoreductase family. As to quaternary structure, homodimer. It depends on FAD as a cofactor.

The protein localises to the cytoplasm. The protein resides in the mitochondrion. The enzyme catalyses 2 glutathione + NADP(+) = glutathione disulfide + NADPH + H(+). In terms of biological role, catalyzes the reduction of glutathione disulfide (GSSG) to reduced glutathione (GSH). Constitutes the major mechanism to maintain a high GSH:GSSG ratio in the cytosol. The chain is Glutathione reductase (GLR1) from Eremothecium gossypii (strain ATCC 10895 / CBS 109.51 / FGSC 9923 / NRRL Y-1056) (Yeast).